The primary structure comprises 105 residues: Small ribosomal subunit protein eS24 (105 aa).

The protein belongs to the eukaryotic ribosomal protein eS24 family.

This is Small ribosomal subunit protein eS24 from Haloquadratum walsbyi (strain DSM 16790 / HBSQ001).